We begin with the raw amino-acid sequence, 133 residues long: Large ribosomal subunit protein eL32z (133 aa).

The protein belongs to the eukaryotic ribosomal protein eL32 family.

The sequence is that of Large ribosomal subunit protein eL32z (RPL32A) from Arabidopsis thaliana (Mouse-ear cress).